A 248-amino-acid polypeptide reads, in one-letter code: 2-acetamido-2-deoxy-D-galactose-binding seed lectin 2 (248 aa).

N-linked (GlcNAc...) asparagine; partial glycosylation is present at N119. Residues E128 and D130 each coordinate Mn(2+). The Ca(2+) site is built by D130, Y132, N134, and D138. Residues D138 and H144 each coordinate Mn(2+).

The protein belongs to the leguminous lectin family.

This chain is 2-acetamido-2-deoxy-D-galactose-binding seed lectin 2, found in Cytisus scoparius (Scotch broom).